A 151-amino-acid polypeptide reads, in one-letter code: Large ribosomal subunit protein bL9 (151 aa).

The protein belongs to the bacterial ribosomal protein bL9 family.

Binds to the 23S rRNA. The protein is Large ribosomal subunit protein bL9 of Lactobacillus helveticus (strain DPC 4571).